The chain runs to 121 residues: Cell division protein FtsB (121 aa).

The Cytoplasmic portion of the chain corresponds to M1–W6. The helical transmembrane segment at L7 to F24 threads the bilayer. Topologically, residues G25–P121 are periplasmic. Residues E31–G66 are a coiled coil. The segment at E92–P121 is disordered. Pro residues predominate over residues L96–I115.

Belongs to the FtsB family. As to quaternary structure, part of a complex composed of FtsB, FtsL and FtsQ.

The protein resides in the cell inner membrane. In terms of biological role, essential cell division protein. May link together the upstream cell division proteins, which are predominantly cytoplasmic, with the downstream cell division proteins, which are predominantly periplasmic. This is Cell division protein FtsB from Xanthomonas euvesicatoria pv. vesicatoria (strain 85-10) (Xanthomonas campestris pv. vesicatoria).